The primary structure comprises 363 residues: Protein disulfide-isomerase 1 (363 aa).

A signal peptide spans 1–20; that stretch reads MKILLFVTLIALAFVALCSA. 2 consecutive Thioredoxin domains span residues 21-132 and 133-285; these read EGNV…NHAK and TNVK…AAAE. Residues cysteine 51, cysteine 54, cysteine 172, and cysteine 175 each act as nucleophile in the active site. Disulfide bonds link cysteine 51-cysteine 54 and cysteine 172-cysteine 175.

This sequence belongs to the protein disulfide isomerase family.

It is found in the endoplasmic reticulum lumen. It catalyses the reaction Catalyzes the rearrangement of -S-S- bonds in proteins.. Its function is as follows. Participates in the folding of proteins containing disulfide bonds, may be involved in glycosylation, prolyl hydroxylation and triglyceride transfer. The polypeptide is Protein disulfide-isomerase 1 (pdi1) (Dictyostelium discoideum (Social amoeba)).